The following is a 481-amino-acid chain: Glutamate--tRNA ligase (481 aa).

Residues 9–19 (PSPTGNLHIGT) carry the 'HIGH' region motif. The 'KMSKS' region motif lies at 249-253 (KLSKR). Lys252 contributes to the ATP binding site.

Belongs to the class-I aminoacyl-tRNA synthetase family. Glutamate--tRNA ligase type 1 subfamily. Monomer.

It localises to the cytoplasm. The enzyme catalyses tRNA(Glu) + L-glutamate + ATP = L-glutamyl-tRNA(Glu) + AMP + diphosphate. Functionally, catalyzes the attachment of glutamate to tRNA(Glu) in a two-step reaction: glutamate is first activated by ATP to form Glu-AMP and then transferred to the acceptor end of tRNA(Glu). This is Glutamate--tRNA ligase from Picosynechococcus sp. (strain ATCC 27264 / PCC 7002 / PR-6) (Agmenellum quadruplicatum).